We begin with the raw amino-acid sequence, 225 residues long: MKKNVTELYKTIDYIFADQGLLEQAMTHRSHKGQHNERLEFLGDSILSFVIANALYAKFPKAREGDLSRMRSTLVRGQTLAEFGLEFGLGDYLRLGPGELKSGGFRRESTLADAVEAIIGAVFLDSDIERCGELILSWYEERLNAISPGLNQKDPKTLLQEHLQARKLSLPGYTVVDTKGQAHNQTFTVECIVDGMDSIISVGSSRRKAEQKAAEKALKILKNEP.

Residues 5–127 (VTELYKTIDY…IIGAVFLDSD (123 aa)) form the RNase III domain. Mg(2+) is bound at residue glutamate 40. Aspartate 44 is a catalytic residue. Mg(2+) contacts are provided by aspartate 113 and glutamate 116. The active site involves glutamate 116. The 70-residue stretch at 154-223 (DPKTLLQEHL…AEKALKILKN (70 aa)) folds into the DRBM domain.

Belongs to the ribonuclease III family. Homodimer. The cofactor is Mg(2+).

The protein localises to the cytoplasm. The catalysed reaction is Endonucleolytic cleavage to 5'-phosphomonoester.. In terms of biological role, digests double-stranded RNA. Involved in the processing of primary rRNA transcript to yield the immediate precursors to the large and small rRNAs (23S and 16S). Processes some mRNAs, and tRNAs when they are encoded in the rRNA operon. Processes pre-crRNA and tracrRNA of type II CRISPR loci if present in the organism. The polypeptide is Ribonuclease 3 (Pseudoalteromonas translucida (strain TAC 125)).